Reading from the N-terminus, the 150-residue chain is MANRFTSSDQTQETHGHHVDKHSFSGRQRHPSMGVHSFNEYMNEYPEAGPLVQEEEDDMESSSYHATQEDIGDDDSRSESTRNRSSQHTGRVNFSSLGGLGSIFGGKKSRSKSANGTQKKNANNNEEQLDEEEQNDPYLDRDISLLGSTI.

The span at 1 to 11 (MANRFTSSDQT) shows a compositional bias: polar residues. Residues 1–150 (MANRFTSSDQ…RDISLLGSTI (150 aa)) form a disordered region. Over residues 12–23 (QETHGHHVDKHS) the composition is skewed to basic and acidic residues. Residues 83-93 (NRSSQHTGRVN) are compositionally biased toward polar residues.

The protein resides in the cytoplasm. The protein localises to the nucleus. Has a role in meiosis. In Schizosaccharomyces pombe (strain 972 / ATCC 24843) (Fission yeast), this protein is Meiotically up-regulated gene 108 protein (mug108).